The primary structure comprises 421 residues: Odorant receptor 67b (421 aa).

At 1–48 (MQDQLDHELERIDKLPKLGLLWVEYSAYALGVNIAPRKRSSKYCRLTR) the chain is on the cytoplasmic side. Residues 49 to 69 (ILVLIVNLSIIYSLVAFIMEN) form a helical membrane-spanning segment. Residues 70-71 (YM) lie on the Extracellular side of the membrane. A helical membrane pass occupies residues 72–92 (ISFETYVEAVLLTFQLSVGVV). The Cytoplasmic portion of the chain corresponds to 93–151 (KMFHFQNKVESCSQLVFSTETGEVLKSLGLFQLDLPRKKELLSSVSLILLNNWMIIDRQ). The helical transmembrane segment at 152–172 (VMFFFKIVCMPVLYYCVRPYF) threads the bilayer. The Extracellular segment spans residues 173–217 (QYIFDCYIKDKDTCEMTLTYPAIVPYLQLGNYEFPSYVIRFFLLQ). Residues 218-238 (SGPLWCFFAVFGFNSLFVVLT) traverse the membrane as a helical segment. Residues 239-289 (RYESGLIKVLRFLVQNSTSDILVPKDQRVKYLQCCVRLFARISSHHNQIEN) lie on the Cytoplasmic side of the membrane. The chain crosses the membrane as a helical span at residues 290–310 (LFKYIILVQCSVSSILICMLL). At 311–315 (YKIST) the chain is on the extracellular side. The helical transmembrane segment at 316-336 (VLEVGWVWMGMIMVYFVTIAL) threads the bilayer. Residues 337–384 (EITLYNVSAQKVESQSELLFHDWYNCSWYNESREFKFMIKMMLLFSRR) are Cytoplasmic-facing. A helical transmembrane segment spans residues 385 to 405 (TFVLSVGGFTSLSHKFLVQVF). The Extracellular portion of the chain corresponds to 406-421 (RLSANFFLLLRNMNNK).

It belongs to the insect chemoreceptor superfamily. Heteromeric odorant receptor channel (TC 1.A.69) family. Or63a subfamily. Interacts with Orco. Complexes exist early in the endomembrane system in olfactory sensory neurons (OSNs), coupling these complexes to the conserved ciliary trafficking pathway.

It localises to the cell membrane. Functionally, odorant receptor which mediates acceptance or avoidance behavior, depending on its substrates. The odorant receptor repertoire encodes a large collection of odor stimuli that vary widely in identity, intensity, and duration. May form a complex with Orco to form odorant-sensing units, providing sensitive and prolonged odorant signaling and calcium permeability. Involved in the behavioral responses to ethyl acetate, pentyl acetate, methyl caproate, anisole, heptanal, 2-heptanone, r-carvone, nonanoic acid, and pyrazines. The polypeptide is Odorant receptor 67b (Or67b) (Drosophila melanogaster (Fruit fly)).